Consider the following 209-residue polypeptide: Probable transcriptional regulator ycf29 (209 aa).

Residues asparagine 4 to isoleucine 120 enclose the Response regulatory domain. Aspartate 53 is subject to 4-aspartylphosphate. The HTH luxR-type domain maps to proline 139–asparagine 204.

The protein resides in the plastid. Its subcellular location is the chloroplast. The sequence is that of Probable transcriptional regulator ycf29 (ycf29) from Porphyra purpurea (Red seaweed).